Consider the following 517-residue polypeptide: Putative pumilio homolog 21 (517 aa).

Disordered stretches follow at residues 33–57 (NHQE…PPLL), 69–94 (KNNQ…PPLV), 107–130 (NHQE…PLLT), and 175–201 (FTPS…PPLS). Over residues 42–51 (NTNINSNNNH) the composition is skewed to low complexity. Residues 69–84 (KNNQEPGESGNTTINR) show a composition bias toward polar residues. Residues 148–502 (ESSNNNYPNL…NTLRVIQEEI (355 aa)) form the PUM-HD domain. Polar residues predominate over residues 177–190 (PSSLTQPDDSSSRY). Residues 258–293 (TTKRIFLHLATNQYGSQALRILFRRSPSLDHLLFCA) form a Pumilio 1; degenerate repeat. The Pumilio 2 repeat unit spans residues 294–328 (VDTNFFLLMSDKYGRGLIIPAIRAVDKTKKESLYK). The Pumilio 3; degenerate repeat unit spans residues 329-363 (LTYEYTLHLARLETGCLALNNVLQEIRGIYRDLIF). Pumilio repeat units follow at residues 364–400 (ECVA…AIAE), 401–437 (RLRG…EEFR), and 438–473 (GNAK…PLLR).

The protein localises to the cytoplasm. Sequence-specific RNA-binding protein that regulates translation and mRNA stability by binding the 3'-UTR of target mRNAs. This is Putative pumilio homolog 21 (APUM21) from Arabidopsis thaliana (Mouse-ear cress).